The chain runs to 425 residues: Argininosuccinate synthase (425 aa).

ATP contacts are provided by residues 7-15 and alanine 33; that span reads AYSGGLDTS. Tyrosine 84 lines the L-citrulline pocket. Position 114 (glycine 114) interacts with ATP. Positions 116, 120, and 121 each coordinate L-aspartate. Residue asparagine 120 participates in L-citrulline binding. The L-citrulline site is built by arginine 124, serine 177, serine 186, glutamate 267, and tyrosine 279.

This sequence belongs to the argininosuccinate synthase family. Type 1 subfamily. In terms of assembly, homotetramer.

The protein localises to the cytoplasm. It catalyses the reaction L-citrulline + L-aspartate + ATP = 2-(N(omega)-L-arginino)succinate + AMP + diphosphate + H(+). Its pathway is amino-acid biosynthesis; L-arginine biosynthesis; L-arginine from L-ornithine and carbamoyl phosphate: step 2/3. This is Argininosuccinate synthase from Pseudothermotoga lettingae (strain ATCC BAA-301 / DSM 14385 / NBRC 107922 / TMO) (Thermotoga lettingae).